A 231-amino-acid polypeptide reads, in one-letter code: NADH-ubiquinone oxidoreductase chain 4 (231 aa).

6 helical membrane passes run 1–21 (PIAGSMVLAAILLKLGGYGII), 34–54 (MFLPFIVLALWGAILANLTCL), 63–85 (IAYSSVSHMGLVVAAIMIQTPWG), 89–111 (AMTLMIAHGFTSSALFCLANTTY), 128–148 (ILPMATTWWLLTNLMNIAIPP), and 156–176 (LLIMSALFSWCPTTIILLGLS).

Belongs to the complex I subunit 4 family.

It is found in the mitochondrion membrane. The enzyme catalyses a ubiquinone + NADH + 5 H(+)(in) = a ubiquinol + NAD(+) + 4 H(+)(out). Its function is as follows. Core subunit of the mitochondrial membrane respiratory chain NADH dehydrogenase (Complex I) that is believed to belong to the minimal assembly required for catalysis. Complex I functions in the transfer of electrons from NADH to the respiratory chain. The immediate electron acceptor for the enzyme is believed to be ubiquinone. This chain is NADH-ubiquinone oxidoreductase chain 4 (MT-ND4), found in Gloydius intermedius (Central Asian pit viper).